We begin with the raw amino-acid sequence, 212 residues long: Phosphoribosylformylglycinamidine synthase subunit PurQ (212 aa).

A Glutamine amidotransferase type-1 domain is found at 2–212 (RIAVLKFPGT…WLGLISWLRR (211 aa)). The Nucleophile role is filled by Cys85. Residues His183, Glu185, and His191 contribute to the active site.

As to quaternary structure, part of the FGAM synthase complex composed of 1 PurL, 1 PurQ and 2 PurS subunits.

It localises to the cytoplasm. It carries out the reaction N(2)-formyl-N(1)-(5-phospho-beta-D-ribosyl)glycinamide + L-glutamine + ATP + H2O = 2-formamido-N(1)-(5-O-phospho-beta-D-ribosyl)acetamidine + L-glutamate + ADP + phosphate + H(+). The catalysed reaction is L-glutamine + H2O = L-glutamate + NH4(+). It functions in the pathway purine metabolism; IMP biosynthesis via de novo pathway; 5-amino-1-(5-phospho-D-ribosyl)imidazole from N(2)-formyl-N(1)-(5-phospho-D-ribosyl)glycinamide: step 1/2. Part of the phosphoribosylformylglycinamidine synthase complex involved in the purines biosynthetic pathway. Catalyzes the ATP-dependent conversion of formylglycinamide ribonucleotide (FGAR) and glutamine to yield formylglycinamidine ribonucleotide (FGAM) and glutamate. The FGAM synthase complex is composed of three subunits. PurQ produces an ammonia molecule by converting glutamine to glutamate. PurL transfers the ammonia molecule to FGAR to form FGAM in an ATP-dependent manner. PurS interacts with PurQ and PurL and is thought to assist in the transfer of the ammonia molecule from PurQ to PurL. This chain is Phosphoribosylformylglycinamidine synthase subunit PurQ, found in Pyrobaculum aerophilum (strain ATCC 51768 / DSM 7523 / JCM 9630 / CIP 104966 / NBRC 100827 / IM2).